A 309-amino-acid chain; its full sequence is MEMO1 family protein C4H3.04c (309 aa).

It belongs to the MEMO1 family.

This chain is MEMO1 family protein C4H3.04c, found in Schizosaccharomyces pombe (strain 972 / ATCC 24843) (Fission yeast).